The following is a 319-amino-acid chain: L-lactate dehydrogenase (319 aa).

NAD(+) is bound by residues V17, D38, K43, Y69, and 83–84 (GA). 2 residues coordinate substrate: Q86 and R92. Residues T105, 122–124 (ATN), and S147 contribute to the NAD(+) site. A substrate-binding site is contributed by 124 to 127 (NPVD). 152-155 (DTAR) is a substrate binding site. Positions 157 and 172 each coordinate beta-D-fructose 1,6-bisphosphate. Catalysis depends on H179, which acts as the Proton acceptor. The residue at position 224 (Y224) is a Phosphotyrosine. T233 lines the substrate pocket.

It belongs to the LDH/MDH superfamily. LDH family. In terms of assembly, homotetramer.

Its subcellular location is the cytoplasm. The enzyme catalyses (S)-lactate + NAD(+) = pyruvate + NADH + H(+). It participates in fermentation; pyruvate fermentation to lactate; (S)-lactate from pyruvate: step 1/1. Its activity is regulated as follows. Allosterically activated by fructose 1,6-bisphosphate (FBP). Catalyzes the conversion of lactate to pyruvate. This chain is L-lactate dehydrogenase, found in Geobacillus sp. (strain WCH70).